A 494-amino-acid polypeptide reads, in one-letter code: Probable malate:quinone oxidoreductase 3 (494 aa).

The protein belongs to the MQO family. FAD serves as cofactor.

The catalysed reaction is (S)-malate + a quinone = a quinol + oxaloacetate. The protein operates within carbohydrate metabolism; tricarboxylic acid cycle; oxaloacetate from (S)-malate (quinone route): step 1/1. The polypeptide is Probable malate:quinone oxidoreductase 3 (Staphylococcus epidermidis (strain ATCC 35984 / DSM 28319 / BCRC 17069 / CCUG 31568 / BM 3577 / RP62A)).